The chain runs to 150 residues: Triosephosphate isomerase (150 aa).

Substrate-binding residues include Asn9 and Lys11. The Electrophile role is filled by His95.

Belongs to the triosephosphate isomerase family. As to quaternary structure, homodimer.

It localises to the cytoplasm. It catalyses the reaction D-glyceraldehyde 3-phosphate = dihydroxyacetone phosphate. It participates in carbohydrate biosynthesis; gluconeogenesis. The protein operates within carbohydrate degradation; glycolysis; D-glyceraldehyde 3-phosphate from glycerone phosphate: step 1/1. In Mycoplasmoides pirum (Mycoplasma pirum), this protein is Triosephosphate isomerase (tpiA).